A 574-amino-acid polypeptide reads, in one-letter code: 2-succinyl-5-enolpyruvyl-6-hydroxy-3-cyclohexene-1-carboxylate synthase (574 aa).

It belongs to the TPP enzyme family. MenD subfamily. In terms of assembly, homodimer. The cofactor is Mg(2+). Mn(2+) serves as cofactor. It depends on thiamine diphosphate as a cofactor.

The enzyme catalyses isochorismate + 2-oxoglutarate + H(+) = 5-enolpyruvoyl-6-hydroxy-2-succinyl-cyclohex-3-ene-1-carboxylate + CO2. Its pathway is quinol/quinone metabolism; 1,4-dihydroxy-2-naphthoate biosynthesis; 1,4-dihydroxy-2-naphthoate from chorismate: step 2/7. The protein operates within cofactor biosynthesis; phylloquinone biosynthesis. Catalyzes the thiamine diphosphate-dependent decarboxylation of 2-oxoglutarate and the subsequent addition of the resulting succinic semialdehyde-thiamine pyrophosphate anion to isochorismate to yield 2-succinyl-5-enolpyruvyl-6-hydroxy-3-cyclohexene-1-carboxylate (SEPHCHC). This is 2-succinyl-5-enolpyruvyl-6-hydroxy-3-cyclohexene-1-carboxylate synthase from Prochlorococcus marinus (strain SARG / CCMP1375 / SS120).